Consider the following 182-residue polypeptide: LIM domain-containing protein C (182 aa).

LIM zinc-binding domains lie at 3–63 (SICP…LFRQ) and 110–170 (TNCP…KFGP).

The protein resides in the cell projection. It is found in the pseudopodium. Its subcellular location is the cytoplasm. It localises to the cell cortex. The protein localises to the cytoskeleton. Functionally, binds to F-actin and may modulate the chemotactic response during early development and contribute to the maintenance of the strength of the actin cytoskeleton. This is LIM domain-containing protein C (limC) from Dictyostelium discoideum (Social amoeba).